The chain runs to 1082 residues: TNF receptor-associated factor homolog 1b (1082 aa).

The disordered stretch occupies residues 1–54 (MAEAVDEDSGVGRSLEESSNGQHSQAGEALSEWRSSGQVENGTPSTSPSYWDID). Position 2 is an N-acetylalanine (Ala2). A compositionally biased stretch (polar residues) spans 33-49 (WRSSGQVENGTPSTSPS). In terms of domain architecture, MATH spans 67 to 198 (YGQYTWKIPK…SGCLTIEAKV (132 aa)). Disordered regions lie at residues 358 to 388 (LPPK…ERDE), 440 to 666 (TEQR…SNVG), 697 to 762 (SIVN…QVVL), 780 to 800 (LSAP…APII), 812 to 841 (SSVQ…NQQT), and 858 to 889 (SSSS…PTSS). 2 stretches are compositionally biased toward basic and acidic residues: residues 359 to 388 (PPKD…ERDE) and 440 to 453 (TEQR…EREK). A coiled-coil region spans residues 446 to 507 (RGAAEREKKS…EEEKDSVTEK (62 aa)). Basic residues predominate over residues 454–471 (KSKKKQAKQKRNKNKGKD). The segment covering 472–488 (KRKEEKVSFATHAKDLE) has biased composition (basic and acidic residues). Composition is skewed to low complexity over residues 519–534 (GDVS…SADI) and 560–573 (SSEG…ISIS). Composition is skewed to polar residues over residues 588–630 (DDSS…QQVK) and 645–666 (QPST…SNVG). 2 stretches are compositionally biased toward low complexity: residues 858 to 871 (SSSS…SSHG) and 878 to 889 (PSSSYSQAPTSS).

Forms homooligomers. Interacts with SNC1, RPS2 and CPR1/CPR30. Interacts with ATG6.

Its subcellular location is the cytoplasm. It localises to the cell membrane. Functionally, functions redundantly with TRAF1A in the regulation of plant immune response. Contributes to the turnover of the nucleotide-binding domain and leucine-rich repeat-containing (NB-LRR) immune receptors SNC1 and RPS2. May associate with an E3 ubiquitin-protein ligase complex, which modulates ubiquitination and subsequent degradation of NB-LRR immune sensors to maintain their homeostasis. Functions redundantly with TRAF1A in the regulation of autophagosome formation. Required for SINAT1- and SINAT2-mediated ubiquitination and destabilization of ATG6. Functions as a molecular adapter that helps to regulate autophagy by modulating ATG6 stability. In Arabidopsis thaliana (Mouse-ear cress), this protein is TNF receptor-associated factor homolog 1b.